A 152-amino-acid chain; its full sequence is Large ribosomal subunit protein uL22 (152 aa).

Residues 124-145 (APKKAAAKKAAPAKETTPAATE) are compositionally biased toward low complexity. The interval 124 to 152 (APKKAAAKKAAPAKETTPAATESKTEGAE) is disordered.

This sequence belongs to the universal ribosomal protein uL22 family. In terms of assembly, part of the 50S ribosomal subunit.

Functionally, this protein binds specifically to 23S rRNA; its binding is stimulated by other ribosomal proteins, e.g. L4, L17, and L20. It is important during the early stages of 50S assembly. It makes multiple contacts with different domains of the 23S rRNA in the assembled 50S subunit and ribosome. Its function is as follows. The globular domain of the protein is located near the polypeptide exit tunnel on the outside of the subunit, while an extended beta-hairpin is found that lines the wall of the exit tunnel in the center of the 70S ribosome. This chain is Large ribosomal subunit protein uL22, found in Salinispora tropica (strain ATCC BAA-916 / DSM 44818 / JCM 13857 / NBRC 105044 / CNB-440).